A 136-amino-acid polypeptide reads, in one-letter code: Frataxin, mitochondrial (136 aa).

It belongs to the frataxin family. As to quaternary structure, monomer. Oligomer.

It is found in the mitochondrion. It carries out the reaction 4 Fe(2+) + O2 + 4 H(+) = 4 Fe(3+) + 2 H2O. Promotes the biosynthesis of heme as well as the assembly and repair of iron-sulfur clusters by delivering Fe(2+) to proteins involved in these pathways. May play a role in the protection against iron-catalyzed oxidative stress through its ability to catalyze the oxidation of Fe(2+) to Fe(3+). May be able to store large amounts of the metal in the form of a ferrihydrite mineral by oligomerization. The polypeptide is Frataxin, mitochondrial (frh-1) (Caenorhabditis elegans).